The sequence spans 305 residues: MQRPDMSVAVAGIKMRNPVMTASGTFGYGAEFADYLDLESIGAMISKGLSLKPKAGNPTPRIVETPGGMLNAIGLQNVGIDAFIEQKLPYLKNVNTPVIVNLYGNTLEEYGEVAARLDGLAGVAGIEVNISCPNVKQGGIVFGTDPGAAQEVVRLVKKNTSKPMIVKLSPNVTDVVVMAKACADAGADALSLINTLTGMAIDLERRRPVLANVTGGLSGPAIKPVALRMVWQVGKAVKLPLIGIGGIMNGRDALEFMLAGATAVQVGTASFLDPSAAQRIAREMEQYLADHNIESVSSLIGALEL.

FMN is bound by residues Ser-23 and 47 to 48 (KG). Substrate-binding positions include Lys-47 and 71-75 (NAIGL). Positions 101 and 129 each coordinate FMN. Substrate is bound at residue Asn-129. The active-site Nucleophile is the Cys-132. Residues Lys-167 and Ile-193 each coordinate FMN. Position 194–195 (194–195 (NT)) interacts with substrate. FMN contacts are provided by residues Gly-219, 245–246 (GG), and 267–268 (GT).

The protein belongs to the dihydroorotate dehydrogenase family. Type 1 subfamily. As to quaternary structure, heterotetramer of 2 PyrK and 2 PyrD type B subunits. FMN is required as a cofactor.

The protein resides in the cytoplasm. The enzyme catalyses (S)-dihydroorotate + NAD(+) = orotate + NADH + H(+). The protein operates within pyrimidine metabolism; UMP biosynthesis via de novo pathway; orotate from (S)-dihydroorotate (NAD(+) route): step 1/1. Functionally, catalyzes the conversion of dihydroorotate to orotate with NAD(+) as electron acceptor. The sequence is that of Dihydroorotate dehydrogenase B (NAD(+)), catalytic subunit (pyrD) from Geobacter sp. (strain M21).